A 522-amino-acid chain; its full sequence is MACKRHSVSDPISKDLVECLRESMQRDLKFETPYVFVIFGASGDLAKKKIYPTLWWLFRDNLLPVNIKFIGYARSDLTVFKLRESFEKNCKVRENEKCAFDDFIKKCSYVQGQYDTSEGFQRLQSSIDDFQKESNNQAVNRLYYLALPPSVFNVVSTELKKNCMDHGDSWTRVIIEKPFGHDLKSSCELSTHLAKLFKEDQIYRIDHYLGKEMVQNLMVMRFGNRILAPSWNRDHIASVMISFKEDFGTGGRAGYFDTAGIIRDVMQNHLMQILTLVAMEKPASLNAEDIRDEKVKVLKAAKVVELKDVVVGQYIASPEFDHPEASQGYKDDKSVPADSTTPTYALAVVHINNERWEGVPFFLRCGKALNEKKAEVRIQFKEVSGDIYPSGELKRSELVMRVQPNEAVYMKLMTKKPGMGFGVEETELDLTYNNRFKEVRLPDAYERLFLEVFMGSQINFVRTDELEYAWRILTPVLEELKKKKVQPVQYKFGSRGPTEGDELMKKYGFIFTGTYKWVAPKL.

Residues 40 to 47 (GASGDLAK), arginine 74, and lysine 177 each bind NADP(+). D-glucose 6-phosphate-binding positions include lysine 177, 207–211 (HYLGK), glutamate 245, and aspartate 264. The active-site Proton acceptor is the histidine 269. Residue arginine 364 coordinates NADP(+). Positions 367 and 372 each coordinate D-glucose 6-phosphate. Residues lysine 373, arginine 377, and arginine 401 each contribute to the NADP(+) site. Residue glutamine 403 participates in D-glucose 6-phosphate binding. NADP(+)-binding positions include 409 to 411 (YMK), 429 to 431 (DLT), arginine 495, and tryptophan 517.

This sequence belongs to the glucose-6-phosphate dehydrogenase family.

Its subcellular location is the cytoplasm. The protein localises to the cytosol. The enzyme catalyses D-glucose 6-phosphate + NADP(+) = 6-phospho-D-glucono-1,5-lactone + NADPH + H(+). It functions in the pathway carbohydrate degradation; pentose phosphate pathway; D-ribulose 5-phosphate from D-glucose 6-phosphate (oxidative stage): step 1/3. Functionally, cytosolic glucose-6-phosphate dehydrogenase that catalyzes the first and rate-limiting step of the oxidative branch within the pentose phosphate pathway/shunt, an alternative route to glycolysis for the dissimilation of carbohydrates and a major source of reducing power and metabolic intermediates for fatty acid and nucleic acid biosynthetic processes. The chain is Glucose-6-phosphate 1-dehydrogenase (gspd-1) from Caenorhabditis elegans.